The primary structure comprises 140 residues: MKIALIAHDRKKTLMIKLATAYKHILEKHELYATGTTGMKVMEATGLPVHCFKSGPLGGDQQIGAMISEDNIDLVIFLRDPLSAQPHEPDVTALIRLSDVYEIPLATNIGSAEILLRGVEAGFADFREVIHEGDRRPLAF.

The region spanning 1-140 is the MGS-like domain; that stretch reads MKIALIAHDR…HEGDRRPLAF (140 aa). Residues H8, K12, 34–37, and 54–55 each bind substrate; these read TGTT and SG. Catalysis depends on D60, which acts as the Proton donor/acceptor. H87 is a binding site for substrate.

This sequence belongs to the methylglyoxal synthase family.

The enzyme catalyses dihydroxyacetone phosphate = methylglyoxal + phosphate. Its function is as follows. Catalyzes the formation of methylglyoxal from dihydroxyacetone phosphate. This is Methylglyoxal synthase from Enterococcus faecalis (strain ATCC 700802 / V583).